The chain runs to 341 residues: Ketol-acid reductoisomerase (NADP(+)) (341 aa).

The region spanning 2–181 (AKVYYNGDAN…GATRAGVLET (180 aa)) is the KARI N-terminal Rossmann domain. NADP(+)-binding positions include 25-28 (YGSQ), arginine 48, serine 52, and 82-85 (DEKQ). Histidine 107 is a catalytic residue. Glycine 133 is an NADP(+) binding site. The 146-residue stretch at 182-327 (TFKEETETDL…RELRSMMPFV (146 aa)) folds into the KARI C-terminal knotted domain. Mg(2+) contacts are provided by aspartate 190, glutamate 194, glutamate 226, and glutamate 230. Serine 251 serves as a coordination point for substrate.

The protein belongs to the ketol-acid reductoisomerase family. Mg(2+) is required as a cofactor.

The enzyme catalyses (2R)-2,3-dihydroxy-3-methylbutanoate + NADP(+) = (2S)-2-acetolactate + NADPH + H(+). It catalyses the reaction (2R,3R)-2,3-dihydroxy-3-methylpentanoate + NADP(+) = (S)-2-ethyl-2-hydroxy-3-oxobutanoate + NADPH + H(+). It participates in amino-acid biosynthesis; L-isoleucine biosynthesis; L-isoleucine from 2-oxobutanoate: step 2/4. The protein operates within amino-acid biosynthesis; L-valine biosynthesis; L-valine from pyruvate: step 2/4. Its function is as follows. Involved in the biosynthesis of branched-chain amino acids (BCAA). Catalyzes an alkyl-migration followed by a ketol-acid reduction of (S)-2-acetolactate (S2AL) to yield (R)-2,3-dihydroxy-isovalerate. In the isomerase reaction, S2AL is rearranged via a Mg-dependent methyl migration to produce 3-hydroxy-3-methyl-2-ketobutyrate (HMKB). In the reductase reaction, this 2-ketoacid undergoes a metal-dependent reduction by NADPH to yield (R)-2,3-dihydroxy-isovalerate. This Geobacillus sp. (strain WCH70) protein is Ketol-acid reductoisomerase (NADP(+)).